Reading from the N-terminus, the 145-residue chain is 3-hydroxyacyl-[acyl-carrier-protein] dehydratase FabZ (145 aa).

His-48 is an active-site residue.

This sequence belongs to the thioester dehydratase family. FabZ subfamily.

Its subcellular location is the cytoplasm. It catalyses the reaction a (3R)-hydroxyacyl-[ACP] = a (2E)-enoyl-[ACP] + H2O. Involved in unsaturated fatty acids biosynthesis. Catalyzes the dehydration of short chain beta-hydroxyacyl-ACPs and long chain saturated and unsaturated beta-hydroxyacyl-ACPs. The protein is 3-hydroxyacyl-[acyl-carrier-protein] dehydratase FabZ of Geobacillus sp. (strain WCH70).